A 185-amino-acid polypeptide reads, in one-letter code: Anterior gradient protein 2 (185 aa).

The first 18 residues, 1-18 (MQTGLSLACLVLLCSVLG), serve as a signal peptide directing secretion. Residues 25–45 (PKRQAGATDTNGAAKSEPAPV) form a disordered region.

It belongs to the AGR family. Expressed in the anterior of the dorsal ectoderm from late gastrula stages onwards. Becomes restricted to the cement gland anlage at the onset of neurulation (stages 13 to 14) and expressed exclusively in the cement gland from stage 18 onwards, with transient expression in the hatching gland during tailbud stages.

The protein localises to the secreted. Functionally, involved in cement gland formation; probably specifies dorsal ectoderm to acquire an anterior fate such as cement gland and forebrain. Signals via the FGF pathway. This chain is Anterior gradient protein 2 (ag2), found in Xenopus laevis (African clawed frog).